A 145-amino-acid polypeptide reads, in one-letter code: 3-hydroxyacyl-[acyl-carrier-protein] dehydratase FabZ (145 aa).

Histidine 47 is a catalytic residue.

The protein belongs to the thioester dehydratase family. FabZ subfamily.

The protein resides in the cytoplasm. The catalysed reaction is a (3R)-hydroxyacyl-[ACP] = a (2E)-enoyl-[ACP] + H2O. Its function is as follows. Involved in unsaturated fatty acids biosynthesis. Catalyzes the dehydration of short chain beta-hydroxyacyl-ACPs and long chain saturated and unsaturated beta-hydroxyacyl-ACPs. In Aromatoleum aromaticum (strain DSM 19018 / LMG 30748 / EbN1) (Azoarcus sp. (strain EbN1)), this protein is 3-hydroxyacyl-[acyl-carrier-protein] dehydratase FabZ.